A 380-amino-acid chain; its full sequence is RNA binding protein fox-1 homolog 2 (380 aa).

2 stretches are compositionally biased toward polar residues: residues 1-20 and 36-56; these read MEKN…TPDT and NGLS…QSTE. A disordered region spans residues 1 to 117; it reads MEKNKMVSQG…TPKRLHVSNI (117 aa). A compositionally biased stretch (low complexity) spans 72 to 102; it reads STPATSTANASSTTDGSQTEGQQSQTQNSEN. Residues 110-186 form the RRM domain; sequence KRLHVSNIPF…RKIEVNNATA (77 aa).

The protein resides in the nucleus. Its subcellular location is the cytoplasm. Functionally, RNA-binding protein that regulates alternative splicing events by binding to 5'-UGCAUGU-3' elements. Regulates alternative splicing of tissue-specific exons. The protein is RNA binding protein fox-1 homolog 2 (rbfox2) of Xenopus tropicalis (Western clawed frog).